The sequence spans 1531 residues: Multidrug resistance-associated protein 1 (1531 aa).

Topologically, residues 1-33 (MALRGFCSADGSDPLWDWNVTWYTSNPDFTKCF) are extracellular. Asparagine 19 is a glycosylation site (N-linked (GlcNAc...) asparagine). The helical transmembrane segment at 34–54 (QNTVLVWVPCFYLWACFPFYF) threads the bilayer. The Cytoplasmic portion of the chain corresponds to 55–74 (LYLSRHDRGYIQMTLLNKTK). The chain crosses the membrane as a helical span at residues 75 to 95 (TALGFLLWIVCWADLFYSFWE). Residues 96–100 (RSRGI) are Extracellular-facing. The helical transmembrane segment at 101 to 121 (FLAPVFLVSPTLLGITMLLAT) threads the bilayer. The Cytoplasmic portion of the chain corresponds to 122 to 133 (FLIQLERRKGVQ). A helical transmembrane segment spans residues 134-154 (SSGIMLTFWLVALLCALAILR). Residues 155–172 (SKIMTALKEDVQVDLFRD) are Extracellular-facing. Residues 173-193 (MTFYVYFSLVLIQLVLSCFSD) form a helical membrane-spanning segment. Residues 194 to 316 (RSPLFSETIH…KEWNPSLFKV (123 aa)) lie on the Cytoplasmic side of the membrane. Tyrosine 277 carries the phosphotyrosine modification. Serine 289 carries the phosphoserine modification. The helical transmembrane segment at 317 to 337 (LYKTFGPYFLMSFFFKAIHDL) threads the bilayer. The region spanning 325 to 608 (FLMSFFFKAI…LPMVISSIVQ (284 aa)) is the ABC transmembrane type-1 1 domain. At 338 to 363 (MMFSGPEILKLLINFVNDTKAPDWQG) the chain is on the extracellular side. The helical transmembrane segment at 364–384 (YFYTALLFVAACLQTLVLHQY) threads the bilayer. Topologically, residues 385-440 (FHICFVSGMRIKTAVIGAVYRKALVITNAARKSSTVGEIVNLMSVDAQRFMDLATY) are cytoplasmic. A helical membrane pass occupies residues 441-461 (INMIWSAPLQVILALYLLWRN). Residues 462 to 464 (LGP) lie on the Extracellular side of the membrane. Residues 465–485 (PILAGVAVMVLMVPVNAVMAM) form a helical membrane-spanning segment. Residues 486-547 (KTKTYQVAHM…VLKKSAYLAA (62 aa)) are Cytoplasmic-facing. Lysine 503 bears the N6-succinyllysine mark. A helical transmembrane segment spans residues 548–568 (VGTFTWVCTPFLVALCTFAVY). The Extracellular portion of the chain corresponds to 569–590 (VTIDKNNVLDAQKAFVSLALFN). Residues 591–611 (ILRFPLNILPMVISSIVQASV) traverse the membrane as a helical segment. At 612–967 (SLKRLRIFLS…VKLSVYWDYM (356 aa)) the chain is on the cytoplasmic side. The ABC transporter 1 domain occupies 644–868 (ITVRNATFTW…DGAFAEFLRT (225 aa)). 678–685 (GQVGCGKS) contributes to the ATP binding site. Residues 871-893 (SAEQEQDPEDNGVTGVSGPGKEA) form a disordered region. A phosphoserine mark is found at serine 905, serine 915, and serine 930. The segment at 917-938 (SSSYSGDVSRQHNSTAELQKDG) is disordered. A compositionally biased stretch (polar residues) spans 922–933 (GDVSRQHNSTAE). Residues 968–988 (KAIGLFISFLSIFLFICNHVA) form a helical membrane-spanning segment. The ABC transmembrane type-1 2 domain maps to 975-1256 (SFLSIFLFIC…LVRMSSEMET (282 aa)). At 989 to 1025 (ALASNYWLSLWTDDPIVNGTQEHTKVRLSVYGALGIS) the chain is on the extracellular side. Residue asparagine 1006 is glycosylated (N-linked (GlcNAc...) asparagine). A helical transmembrane segment spans residues 1026–1046 (QGIAVFGYSMAVSIGGILASR). The Cytoplasmic segment spans residues 1047 to 1089 (CLHVDLLHSILRSPMSFFERTPSGNLVNRFSKELDTVDSMIPE). A helical membrane pass occupies residues 1090–1110 (VIKMFMGSLFNVIGACIVILL). Position 1111 (alanine 1111) is a topological domain, extracellular. A helical membrane pass occupies residues 1112–1132 (TPIAAIIIPPLGLIYFFVQRF). Residues 1133-1203 (YVASSRQLKR…VANRWLAVRL (71 aa)) lie on the Cytoplasmic side of the membrane. A helical membrane pass occupies residues 1204-1224 (ECVGNCIVLFAALFAVISRHS). At 1225 to 1226 (LS) the chain is on the extracellular side. Residues 1227–1247 (AGLVGLSVSYSLQVTTYLNWL) traverse the membrane as a helical segment. Topologically, residues 1248-1531 (VRMSSEMETN…YNMARDAGLV (284 aa)) are cytoplasmic. Residues 1293–1527 (VEFRNYCLRY…RGLFYNMARD (235 aa)) enclose the ABC transporter 2 domain. Residue 1327–1334 (GRTGAGKS) coordinates ATP.

It belongs to the ABC transporter superfamily. ABCC family. Conjugate transporter (TC 3.A.1.208) subfamily.

It is found in the cell membrane. The protein localises to the basolateral cell membrane. The enzyme catalyses ATP + H2O + xenobioticSide 1 = ADP + phosphate + xenobioticSide 2.. It carries out the reaction an S-substituted glutathione(in) + ATP + H2O = an S-substituted glutathione(out) + ADP + phosphate + H(+). It catalyses the reaction sphing-4-enine 1-phosphate(in) + ATP + H2O = sphing-4-enine 1-phosphate(out) + ADP + phosphate + H(+). The catalysed reaction is leukotriene C4(in) + ATP + H2O = leukotriene C4(out) + ADP + phosphate + H(+). The enzyme catalyses 17beta-estradiol 17-O-(beta-D-glucuronate)(in) + ATP + H2O = 17beta-estradiol 17-O-(beta-D-glucuronate)(out) + ADP + phosphate + H(+). It carries out the reaction daunorubicin(in) + ATP + H2O = daunorubicin(out) + ADP + phosphate + H(+). It catalyses the reaction vincristine(in) + ATP + H2O = vincristine(out) + ADP + phosphate + H(+). The catalysed reaction is 2',3'-cGAMP(in) + ATP + H2O = 2',3'-cGAMP(out) + ADP + phosphate + H(+). The enzyme catalyses S-[(2E,6E,10E)-geranylgeranyl]-L-glutathione(in) + ATP + H2O = S-[(2E,6E,10E)-geranylgeranyl]-L-glutathione(out) + ADP + phosphate + H(+). It carries out the reaction prostaglandin A2-S-(R)-glutathione(in) + ATP + H2O = prostaglandin A2-S-(R)-glutathione(out) + ADP + phosphate + H(+). It catalyses the reaction prostaglandin A2-S-(S)-glutathione(in) + ATP + H2O = prostaglandin A2-S-(S)-glutathione(out) + ADP + phosphate + H(+). MK 571 inhibits sphingosine 1-phosphate and leukotriene C4 export. Functionally, mediates export of organic anions and drugs from the cytoplasm. Mediates ATP-dependent transport of glutathione and glutathione conjugates, leukotriene C4, estradiol-17-beta-o-glucuronide, methotrexate, antiviral drugs and other xenobiotics. Confers resistance to anticancer drugs by decreasing accumulation of drug in cells, and by mediating ATP- and GSH-dependent drug export. Hydrolyzes ATP with low efficiency. Catalyzes the export of sphingosine 1-phosphate from mast cells independently of their degranulation. Participates in inflammatory response by allowing export of leukotriene C4 from leukotriene C4-synthesizing cells. Mediates ATP-dependent, GSH-independent cyclic GMP-AMP (cGAMP) export. Thus, by limiting intracellular cGAMP concentrations negatively regulates the cGAS-STING pathway. Exports S-geranylgeranyl-glutathione (GGG) in lymphoid cells and stromal compartments of lymphoid organs. ABCC1 (via extracellular transport) with GGT5 (via GGG catabolism) establish GGG gradients within lymphoid tissues to position P2RY8-positive lymphocytes at germinal centers in lymphoid follicles and restrict their chemotactic transmigration from blood vessels to the bone marrow parenchyma. Mediates basolateral export of GSH-conjugated R- and S-prostaglandin A2 diastereomers in polarized epithelial cells. This is Multidrug resistance-associated protein 1 from Macaca fascicularis (Crab-eating macaque).